The following is a 430-amino-acid chain: Bifunctional protein GlmU (430 aa).

Positions 1–223 (MSISVVILAA…EEEFKGVNSK (223 aa)) are pyrophosphorylase. UDP-N-acetyl-alpha-D-glucosamine contacts are provided by residues 8 to 11 (LAAG), lysine 22, and 81 to 82 (GT). Aspartate 102 serves as a coordination point for Mg(2+). Glycine 135, glutamate 149, asparagine 164, and asparagine 221 together coordinate UDP-N-acetyl-alpha-D-glucosamine. Position 221 (asparagine 221) interacts with Mg(2+). The interval 224 to 244 (LDLARAEEIMQRRIKEALMMA) is linker. Positions 245–430 (GVTMCLPETI…NFFYKFFGDK (186 aa)) are N-acetyltransferase. Arginine 308 and lysine 325 together coordinate UDP-N-acetyl-alpha-D-glucosamine. Histidine 336 functions as the Proton acceptor in the catalytic mechanism. UDP-N-acetyl-alpha-D-glucosamine contacts are provided by tyrosine 339 and asparagine 350. Acetyl-CoA contacts are provided by residues alanine 353, 359–360 (NY), serine 378, alanine 396, and arginine 413.

It in the N-terminal section; belongs to the N-acetylglucosamine-1-phosphate uridyltransferase family. In the C-terminal section; belongs to the transferase hexapeptide repeat family. Homotrimer. It depends on Mg(2+) as a cofactor.

It is found in the cytoplasm. The catalysed reaction is alpha-D-glucosamine 1-phosphate + acetyl-CoA = N-acetyl-alpha-D-glucosamine 1-phosphate + CoA + H(+). It catalyses the reaction N-acetyl-alpha-D-glucosamine 1-phosphate + UTP + H(+) = UDP-N-acetyl-alpha-D-glucosamine + diphosphate. The protein operates within nucleotide-sugar biosynthesis; UDP-N-acetyl-alpha-D-glucosamine biosynthesis; N-acetyl-alpha-D-glucosamine 1-phosphate from alpha-D-glucosamine 6-phosphate (route II): step 2/2. It participates in nucleotide-sugar biosynthesis; UDP-N-acetyl-alpha-D-glucosamine biosynthesis; UDP-N-acetyl-alpha-D-glucosamine from N-acetyl-alpha-D-glucosamine 1-phosphate: step 1/1. Its pathway is bacterial outer membrane biogenesis; LPS lipid A biosynthesis. Its function is as follows. Catalyzes the last two sequential reactions in the de novo biosynthetic pathway for UDP-N-acetylglucosamine (UDP-GlcNAc). The C-terminal domain catalyzes the transfer of acetyl group from acetyl coenzyme A to glucosamine-1-phosphate (GlcN-1-P) to produce N-acetylglucosamine-1-phosphate (GlcNAc-1-P), which is converted into UDP-GlcNAc by the transfer of uridine 5-monophosphate (from uridine 5-triphosphate), a reaction catalyzed by the N-terminal domain. The sequence is that of Bifunctional protein GlmU from Sulfurovum sp. (strain NBC37-1).